The following is a 780-amino-acid chain: MELRRGKTFIKSSVQISHEKLIDSPAKEDPDKWPLSLGEQQRAYGEKSSQTSPCSQGYGRCPNKEVLSDPEGGPVPLCGTTFKLVRKSKTHDSVPGAVKAAAPTGQMVGSTSFSETPGGQRMIDYRHFVPQMPFVPAVAKSIPRKRISLKRSKKCFRNLFHMRRSKTENLASLSAKGKNLSPSGVPAQQGTAFLSMGEGLGLDSLCQDLSDSEFLHDSPFDLCSALCEDVASLKSFDSLTGCGEIFADGSSVPSVELKDGPESPAHSPQALDCKTPCGPAQGGMEQLMSPAQNEASDFNKFWDSVNRSVQQQQRALMGPWLTSPEGTETDQTRLDTSGLAELPLFPCRGPPSGSKASSIDTGTPKSEQPESVSTSDEGYYDSFSPGLEEEKKEAASPGTPAATFPRDSYSGDALYELFYDPSEAPVGPILDDDCVSESLSGPALGTPLSMCSFRVGAEENLAPAPGPDLLSQGFLQSTWKGKECLLKLCDTELAITMGIVNWLRRTPPATSPTPASTPAPTPALVLREPAAPPDPHRVLRGASVGVKGREDQATTCFPPSRQEPWAHSGTKNLLVRECEVLGEPARGSKTPSKDDSLEEGTQDFSEGQSSSEATMTSISGNNKAVTSATCLSSQKELGTPGNLRYSQGPLRPGHRGSALDPGPMLVGCVTHVAALQIYPDSNSPRQDKGNGLFWKPQAWGPNILQKNPISSKPNEAAGCGLSSSASPQDQKCRDLFLDLNQLKLEPSRLGPQACSSVDSQPQQLCPRAPEQVPHRGSVGS.

A compositionally biased stretch (basic and acidic residues) spans 20–32 (KLIDSPAKEDPDK). Disordered stretches follow at residues 20–59 (KLID…QGYG), 341–407 (ELPL…FPRD), 547–569 (KGRE…AHSG), 582–617 (GEPA…TMTS), 635–659 (KELG…GSAL), 706–729 (KNPI…SPQD), and 749–780 (LGPQ…SVGS). Residues 354–376 (SKASSIDTGTPKSEQPESVSTSD) show a composition bias toward polar residues. Residues 602–617 (QDFSEGQSSSEATMTS) are compositionally biased toward polar residues. Residues 753-763 (ACSSVDSQPQQ) show a composition bias toward polar residues.

The protein belongs to the Amer family.

It localises to the cell membrane. Functionally, regulator of the canonical Wnt signaling pathway. Acts by specifically binding phosphatidylinositol 4,5-bisphosphate (PtdIns(4,5)P2), translocating to the cell membrane. This chain is APC membrane recruitment protein 3 (Amer3), found in Mus musculus (Mouse).